The sequence spans 185 residues: Thymidine kinase (185 aa).

17–24 is a binding site for ATP; sequence GPMFAGKT. Catalysis depends on glutamate 92, which acts as the Proton acceptor. Residue phenylalanine 121 coordinates substrate. Residues cysteine 146 and cysteine 149 each contribute to the Zn(2+) site. 166 to 170 lines the substrate pocket; the sequence is LILAG. Zn(2+) is bound by residues cysteine 179 and cysteine 182.

Belongs to the thymidine kinase family.

It carries out the reaction thymidine + ATP = dTMP + ADP + H(+). In terms of biological role, phosphorylates thymidine. ASFV replicates in the cytoplasm of infected cells and contains genes encoding a number of enzymes needed for DNA synthesis, including thymidine kinase. Important for growth in swine macrophages in vitro and is a virus virulence factor in swine. The polypeptide is Thymidine kinase (African swine fever virus (isolate Pig/Kenya/KEN-50/1950) (ASFV)).